We begin with the raw amino-acid sequence, 141 residues long: Large ribosomal subunit protein bL17 (141 aa).

A disordered region spans residues 120-141 (TSAKGQDSGPVLTADEDEFEAA).

The protein belongs to the bacterial ribosomal protein bL17 family. As to quaternary structure, part of the 50S ribosomal subunit. Contacts protein L32.

This Novosphingobium aromaticivorans (strain ATCC 700278 / DSM 12444 / CCUG 56034 / CIP 105152 / NBRC 16084 / F199) protein is Large ribosomal subunit protein bL17.